A 795-amino-acid chain; its full sequence is Mitochondrial inner membrane m-AAA protease component paraplegin (795 aa).

A mitochondrion-targeting transit peptide spans 1-43; it reads MAVLLLLLRALRRGPGPGPRPLWGPGPAWSPGFPARPGRGRPY. A propeptide spans 44–105 (removed in mature form); sequence MASRPPGDLA…GGTFYFNTSR (62 aa). At 106 to 144 the chain is on the mitochondrial matrix side; it reads LKQKNKEKDKSKGKAPEEDEEERRRRERDDQMYRERLRT. A disordered region spans residues 108 to 133; it reads QKNKEKDKSKGKAPEEDEEERRRRER. The segment covering 109–133 has biased composition (basic and acidic residues); the sequence is KNKEKDKSKGKAPEEDEEERRRRER. The helical transmembrane segment at 145 to 165 threads the bilayer; sequence LLVIAVVMSLLNALSTSGGSI. Topologically, residues 166–248 are mitochondrial intermembrane; that stretch reads SWNDFVHEML…DRIPVSYKRT (83 aa). Residues 249–269 traverse the membrane as a helical segment; that stretch reads GFFGNALYSVGMTAVGLAILW. Topologically, residues 270–795 are mitochondrial matrix; it reads YVFRLAGMTG…LGGEEPTWPK (526 aa). Positions 312, 352, 353, 354, 355, 356, and 357 each coordinate ATP. Y505 is subject to 3'-nitrotyrosine. H574 is a binding site for Zn(2+). Residue E575 is part of the active site. 2 residues coordinate Zn(2+): H578 and D650. Positions 701–795 are interaction with PPIF; sequence HEARLLVAKA…LGGEEPTWPK (95 aa). Positions 751-795 are disordered; sequence PHGPKKMIAPQRWIDAQREKQDLGEEETEETQQPPLGGEEPTWPK.

It in the N-terminal section; belongs to the AAA ATPase family. The protein in the C-terminal section; belongs to the peptidase M41 family. As to quaternary structure, forms heterooligomers with AFG3L2; the m-AAA protease is composed of heterohexamers of AFG3L2 and SPG7. Component of the mitochondrial permeability transition pore complex (mPTPC), at least composed of SPG7, VDAC1 and PPIF. Interacts with MAIP1. Zn(2+) is required as a cofactor. In terms of processing, upon import into the mitochondrion, the N-terminal transit peptide is cleaved by the mitochondrial-processing peptidase (MPP) to generate an intermediate form which undergoes a second proteolytic cleavage mediated by proteases AFG3L2 removing an additional N-terminal fragment to generate the proteolytically active mature form. As to expression, ubiquitous.

It is found in the mitochondrion inner membrane. It carries out the reaction ATP + H2O = ADP + phosphate + H(+). Catalytic component of the m-AAA protease, a protease that plays a key role in proteostasis of inner mitochondrial membrane proteins, and which is essential for axonal and neuron development. SPG7 possesses both ATPase and protease activities: the ATPase activity is required to unfold substrates, threading them into the internal proteolytic cavity for hydrolysis into small peptide fragments. The m-AAA protease exerts a dual role in the mitochondrial inner membrane: it mediates the processing of specific regulatory proteins and ensures protein quality control by degrading misfolded polypeptides. Mediates protein maturation of the mitochondrial ribosomal subunit MRPL32/bL32m by catalyzing the cleavage of the presequence of MRPL32/bL32m prior to assembly into the mitochondrial ribosome. Acts as a regulator of calcium in neurons by mediating degradation of SMDT1/EMRE before its assembly with the uniporter complex, limiting the availability of SMDT1/EMRE for MCU assembly and promoting efficient assembly of gatekeeper subunits with MCU. Also regulates mitochondrial calcium by catalyzing degradation of MCU. Plays a role in the formation and regulation of the mitochondrial permeability transition pore (mPTP) and its proteolytic activity is dispensable for this function. The protein is Mitochondrial inner membrane m-AAA protease component paraplegin of Homo sapiens (Human).